A 939-amino-acid polypeptide reads, in one-letter code: Valine--tRNA ligase (939 aa).

The short motif at 45-55 (PNVTGTLHMGH) is the 'HIGH' region element. A 'KMSKS' region motif is present at residues 549–553 (KMSKS). ATP is bound at residue lysine 552. The stretch at 876 to 939 (AAETARLRKE…KIRVQLVKLA (64 aa)) forms a coiled coil.

This sequence belongs to the class-I aminoacyl-tRNA synthetase family. ValS type 1 subfamily. In terms of assembly, monomer.

The protein localises to the cytoplasm. It carries out the reaction tRNA(Val) + L-valine + ATP = L-valyl-tRNA(Val) + AMP + diphosphate. Functionally, catalyzes the attachment of valine to tRNA(Val). As ValRS can inadvertently accommodate and process structurally similar amino acids such as threonine, to avoid such errors, it has a 'posttransfer' editing activity that hydrolyzes mischarged Thr-tRNA(Val) in a tRNA-dependent manner. The sequence is that of Valine--tRNA ligase from Chromobacterium violaceum (strain ATCC 12472 / DSM 30191 / JCM 1249 / CCUG 213 / NBRC 12614 / NCIMB 9131 / NCTC 9757 / MK).